Here is a 184-residue protein sequence, read N- to C-terminus: Bifunctional protein PyrR (184 aa).

A PRPP-binding motif is present at residues 105 to 117; that stretch reads VVMVDDVLFTGRT.

The protein belongs to the purine/pyrimidine phosphoribosyltransferase family. PyrR subfamily.

The catalysed reaction is UMP + diphosphate = 5-phospho-alpha-D-ribose 1-diphosphate + uracil. In terms of biological role, regulates the transcription of the pyrimidine nucleotide (pyr) operon in response to exogenous pyrimidines. Also displays a weak uracil phosphoribosyltransferase activity which is not physiologically significant. In Rubrobacter xylanophilus (strain DSM 9941 / JCM 11954 / NBRC 16129 / PRD-1), this protein is Bifunctional protein PyrR.